A 564-amino-acid polypeptide reads, in one-letter code: Potassium-transporting ATPase potassium-binding subunit (564 aa).

10 consecutive transmembrane segments (helical) span residues 4 to 24 (YDFA…PWLG), 67 to 87 (TLAL…VLLL), 135 to 155 (LGLT…LVVL), 179 to 199 (LYGL…QGVP), 258 to 278 (FEVA…GHYV), 286 to 306 (AILA…LWSE), 382 to 402 (AGLY…GLMI), 420 to 440 (LLVA…AIAA), 487 to 507 (LMIG…ILAL), and 533 to 553 (GLLL…TLAL).

It belongs to the KdpA family. As to quaternary structure, the system is composed of three essential subunits: KdpA, KdpB and KdpC.

It is found in the cell inner membrane. Its function is as follows. Part of the high-affinity ATP-driven potassium transport (or Kdp) system, which catalyzes the hydrolysis of ATP coupled with the electrogenic transport of potassium into the cytoplasm. This subunit binds the periplasmic potassium ions and delivers the ions to the membrane domain of KdpB through an intramembrane tunnel. This chain is Potassium-transporting ATPase potassium-binding subunit, found in Pseudomonas putida (strain ATCC 47054 / DSM 6125 / CFBP 8728 / NCIMB 11950 / KT2440).